The sequence spans 86 residues: Large ribosomal subunit protein bL31B (86 aa).

This sequence belongs to the bacterial ribosomal protein bL31 family. Type B subfamily. In terms of assembly, part of the 50S ribosomal subunit.

This Chloroherpeton thalassium (strain ATCC 35110 / GB-78) protein is Large ribosomal subunit protein bL31B.